A 27-amino-acid chain; its full sequence is Pyruvate dehydrogenase protein X component, mitochondrial (27 aa).

Positions 1 to 27 (FRLSPAARNILEKHSLDASQGTATGPR) are disordered. One can recognise a Peripheral subunit-binding (PSBD) domain in the interval 2 to 27 (RLSPAARNILEKHSLDASQGTATGPR). At Lys13 the chain carries N6-acetyllysine. Ser15 bears the Phosphoserine mark. The segment covering 17-27 (DASQGTATGPR) has biased composition (polar residues).

This sequence belongs to the 2-oxoacid dehydrogenase family. Part of the inner core of the multimeric pyruvate dehydrogenase complex that is composed of about 48 DLAT and 12 PDHX molecules. This core binds multiple copies of pyruvate dehydrogenase (subunits PDH1A and PDHB, E1), dihydrolipoamide acetyltransferase (DLAT, E2) and lipoamide dehydrogenase (DLD, E3). Interacts with SIRT4. Interacts with DLD.

It localises to the mitochondrion matrix. In terms of biological role, required for anchoring dihydrolipoamide dehydrogenase (E3) to the dihydrolipoamide transacetylase (E2) core of the pyruvate dehydrogenase complexes of eukaryotes. This specific binding is essential for a functional PDH complex. The sequence is that of Pyruvate dehydrogenase protein X component, mitochondrial from Mesocricetus auratus (Golden hamster).